Here is a 127-residue protein sequence, read N- to C-terminus: Protein ApaG (127 aa).

In terms of domain architecture, ApaG spans 3 to 127 (EGKKYQINIS…FTLAMPRVLH (125 aa)).

This Thiobacillus denitrificans (strain ATCC 25259 / T1) protein is Protein ApaG.